The following is a 454-amino-acid chain: Tol-Pal system protein TolB (454 aa).

The first 30 residues, 1–30 (MNDARSITRRRFMTLTGSGLAMLGGGHAFA), serve as a signal peptide directing secretion.

The protein belongs to the TolB family. The Tol-Pal system is composed of five core proteins: the inner membrane proteins TolA, TolQ and TolR, the periplasmic protein TolB and the outer membrane protein Pal. They form a network linking the inner and outer membranes and the peptidoglycan layer.

The protein resides in the periplasm. In terms of biological role, part of the Tol-Pal system, which plays a role in outer membrane invagination during cell division and is important for maintaining outer membrane integrity. This is Tol-Pal system protein TolB from Bradyrhizobium diazoefficiens (strain JCM 10833 / BCRC 13528 / IAM 13628 / NBRC 14792 / USDA 110).